The chain runs to 349 residues: Phosphate acetyltransferase (349 aa).

It belongs to the phosphate acetyltransferase and butyryltransferase family.

Its subcellular location is the cytoplasm. The enzyme catalyses acetyl-CoA + phosphate = acetyl phosphate + CoA. It functions in the pathway metabolic intermediate biosynthesis; acetyl-CoA biosynthesis; acetyl-CoA from acetate: step 2/2. This chain is Phosphate acetyltransferase (pta), found in Rickettsia typhi (strain ATCC VR-144 / Wilmington).